The primary structure comprises 211 residues: Small ribosomal subunit protein uS3 (211 aa).

In terms of domain architecture, KH type-2 spans 38-106 (LRNFLKKRLY…EVYLNIQEVR (69 aa)).

It belongs to the universal ribosomal protein uS3 family. As to quaternary structure, part of the 30S ribosomal subunit. Forms a tight complex with proteins S10 and S14.

Binds the lower part of the 30S subunit head. Binds mRNA in the 70S ribosome, positioning it for translation. This chain is Small ribosomal subunit protein uS3, found in Citrifermentans bemidjiense (strain ATCC BAA-1014 / DSM 16622 / JCM 12645 / Bem) (Geobacter bemidjiensis).